Consider the following 462-residue polypeptide: 7-hydroxymethyl chlorophyll a reductase, chloroplastic (462 aa).

A chloroplast-targeting transit peptide spans 1–20 (MITVVTSRLSLLPPVFSVVN).

This sequence belongs to the FrhB family. Interacts with SGR1, the chlorophyll catabolic enzymes (CCEs) NYC1, NOL and RCCR, and the LHCII complex. Part of a SGR1-CCE-LHCII complex, which acts in chlorophyll breakdown. It depends on FAD as a cofactor. The cofactor is iron-sulfur cluster.

It is found in the plastid. Its subcellular location is the chloroplast. The enzyme catalyses chlorophyll a + 2 oxidized [2Fe-2S]-[ferredoxin] + H2O = 7(1)-hydroxychlorophyll a + 2 reduced [2Fe-2S]-[ferredoxin] + 2 H(+). Probable iron-sulfur flavoprotein that converts 7-hydroxymethyl chlorophyll a to chlorophyll a using ferredoxin as a reducing equivalent. Catalyzes the reduction of a hydroxymethyl group to a methyl group. Belongs to the chlorophyll catabolic enzymes (CCEs). This is 7-hydroxymethyl chlorophyll a reductase, chloroplastic (HCAR) from Arabidopsis thaliana (Mouse-ear cress).